The following is a 624-amino-acid chain: Pentatricopeptide repeat-containing protein At4g31070, mitochondrial (624 aa).

The transit peptide at 1 to 15 (MRWVKLGRRVIMSRA) directs the protein to the mitochondrion. PPR repeat units follow at residues 56–91 (FTAILPSVIKACAFQQEPFLLGAQLHCLCLKAGADC), 92–122 (DTVVSNSLISMYAKFSRKYAVRKVFDEMLHR), 123–157 (DTVSYCSIINSCCQDGLLYEAMKLIKEMYFYGFIP), 158–192 (KSELVASLLALCTRMGSSSKVARMFHALVLVDERM), 195–225 (SVLLSTALVDMYLKFDDHAAAFHVFDQMEVK), 226–260 (NEVSWTAMISGCVANQNYEMGVDLFRAMQRENLRP), 261–296 (NRVTLLSVLPACVELNYGSSLVKEIHGFSFRHGCHA), 297–327 (DERLTAAFMTMYCRCGNVSLSRVLFETSKVR), 328–362 (DVVMWSSMISGYAETGDCSEVMNLLNQMRKEGIEA), 363–397 (NSVTLLAIVSACTNSTLLSFASTVHSQILKCGFMS), 398–428 (HILLGNALIDMYAKCGSLSAAREVFYELTEK), 429–463 (DLVSWSSMINAYGLHGHGSEALEIFKGMIKGGHEV), 464–498 (DDMAFLAILSACNHAGLVEEAQTIFTQAGKYHMPV), and 499–529 (TLEHYACYINLLGRFGKIDDAFEVTINMPMK). Positions 534–610 (IWSSLLSACE…CYGFSKIEPE (77 aa)) are type E motif.

Belongs to the PPR family. PCMP-E subfamily.

It localises to the mitochondrion. This is Pentatricopeptide repeat-containing protein At4g31070, mitochondrial (PCMP-E7) from Arabidopsis thaliana (Mouse-ear cress).